The following is a 199-amino-acid chain: Holliday junction branch migration complex subunit RuvA (199 aa).

Residues M1 to A64 form a domain I region. Positions S65–M143 are domain II. The flexible linker stretch occupies residues R144–G150. The domain III stretch occupies residues S151 to L199.

The protein belongs to the RuvA family. In terms of assembly, homotetramer. Forms an RuvA(8)-RuvB(12)-Holliday junction (HJ) complex. HJ DNA is sandwiched between 2 RuvA tetramers; dsDNA enters through RuvA and exits via RuvB. An RuvB hexamer assembles on each DNA strand where it exits the tetramer. Each RuvB hexamer is contacted by two RuvA subunits (via domain III) on 2 adjacent RuvB subunits; this complex drives branch migration. In the full resolvosome a probable DNA-RuvA(4)-RuvB(12)-RuvC(2) complex forms which resolves the HJ.

The protein localises to the cytoplasm. Its function is as follows. The RuvA-RuvB-RuvC complex processes Holliday junction (HJ) DNA during genetic recombination and DNA repair, while the RuvA-RuvB complex plays an important role in the rescue of blocked DNA replication forks via replication fork reversal (RFR). RuvA specifically binds to HJ cruciform DNA, conferring on it an open structure. The RuvB hexamer acts as an ATP-dependent pump, pulling dsDNA into and through the RuvAB complex. HJ branch migration allows RuvC to scan DNA until it finds its consensus sequence, where it cleaves and resolves the cruciform DNA. In Nitrosococcus oceani (strain ATCC 19707 / BCRC 17464 / JCM 30415 / NCIMB 11848 / C-107), this protein is Holliday junction branch migration complex subunit RuvA.